The chain runs to 291 residues: Deaminated glutathione amidase (291 aa).

The 256-residue stretch at 13–268 (KRIGLGQITS…NDIAFVDIDL (256 aa)) folds into the CN hydrolase domain. Catalysis depends on Glu52, which acts as the Proton acceptor. Lys130 serves as the catalytic Proton donor. Cys172 acts as the Nucleophile in catalysis.

Belongs to the carbon-nitrogen hydrolase superfamily. NIT1/NIT2 family.

The catalysed reaction is N-(4-oxoglutaryl)-L-cysteinylglycine + H2O = L-cysteinylglycine + 2-oxoglutarate. Functionally, catalyzes the hydrolysis of the amide bond in N-(4-oxoglutarate)-L-cysteinylglycine (deaminated glutathione), a metabolite repair reaction to dispose of the harmful deaminated glutathione. This chain is Deaminated glutathione amidase (nit1-1), found in Dictyostelium discoideum (Social amoeba).